We begin with the raw amino-acid sequence, 237 residues long: Thiamine-phosphate synthase (237 aa).

Residues 57-61 (QLRDK) and N98 each bind 4-amino-2-methyl-5-(diphosphooxymethyl)pyrimidine. Mg(2+)-binding residues include D99 and D118. Position 136 (S136) interacts with 4-amino-2-methyl-5-(diphosphooxymethyl)pyrimidine. Residue 162–164 (TPT) coordinates 2-[(2R,5Z)-2-carboxy-4-methylthiazol-5(2H)-ylidene]ethyl phosphate. K165 provides a ligand contact to 4-amino-2-methyl-5-(diphosphooxymethyl)pyrimidine. G193 is a binding site for 2-[(2R,5Z)-2-carboxy-4-methylthiazol-5(2H)-ylidene]ethyl phosphate.

Belongs to the thiamine-phosphate synthase family. Mg(2+) is required as a cofactor.

The enzyme catalyses 2-[(2R,5Z)-2-carboxy-4-methylthiazol-5(2H)-ylidene]ethyl phosphate + 4-amino-2-methyl-5-(diphosphooxymethyl)pyrimidine + 2 H(+) = thiamine phosphate + CO2 + diphosphate. It carries out the reaction 2-(2-carboxy-4-methylthiazol-5-yl)ethyl phosphate + 4-amino-2-methyl-5-(diphosphooxymethyl)pyrimidine + 2 H(+) = thiamine phosphate + CO2 + diphosphate. It catalyses the reaction 4-methyl-5-(2-phosphooxyethyl)-thiazole + 4-amino-2-methyl-5-(diphosphooxymethyl)pyrimidine + H(+) = thiamine phosphate + diphosphate. It participates in cofactor biosynthesis; thiamine diphosphate biosynthesis; thiamine phosphate from 4-amino-2-methyl-5-diphosphomethylpyrimidine and 4-methyl-5-(2-phosphoethyl)-thiazole: step 1/1. Functionally, condenses 4-methyl-5-(beta-hydroxyethyl)thiazole monophosphate (THZ-P) and 2-methyl-4-amino-5-hydroxymethyl pyrimidine pyrophosphate (HMP-PP) to form thiamine monophosphate (TMP). This chain is Thiamine-phosphate synthase, found in Mycolicibacterium gilvum (strain PYR-GCK) (Mycobacterium gilvum (strain PYR-GCK)).